We begin with the raw amino-acid sequence, 106 residues long: Large ribosomal subunit protein uL22 (106 aa).

This sequence belongs to the universal ribosomal protein uL22 family. As to quaternary structure, part of the 50S ribosomal subunit.

In terms of biological role, this protein binds specifically to 23S rRNA; its binding is stimulated by other ribosomal proteins, e.g. L4, L17, and L20. It is important during the early stages of 50S assembly. It makes multiple contacts with different domains of the 23S rRNA in the assembled 50S subunit and ribosome. Its function is as follows. The globular domain of the protein is located near the polypeptide exit tunnel on the outside of the subunit, while an extended beta-hairpin is found that lines the wall of the exit tunnel in the center of the 70S ribosome. In Nautilia profundicola (strain ATCC BAA-1463 / DSM 18972 / AmH), this protein is Large ribosomal subunit protein uL22.